Here is a 323-residue protein sequence, read N- to C-terminus: Sphingolipid delta(4)-desaturase DES1 (323 aa).

A lipid anchor (N-myristoyl glycine) is attached at Gly-2. The next 2 helical transmembrane spans lie at 41-61 (PNLI…FYLV) and 68-88 (WLMF…TLAI). The Histidine box-1 motif lies at 89 to 93 (HEISH). The helical transmembrane segment at 104–124 (WNRWFGMFANLSLGVPYSISF) threads the bilayer. Positions 128–132 (HMDHH) match the Histidine box-2 motif. The next 3 helical transmembrane spans lie at 152–172 (FFCT…FYAF), 184–204 (HLEV…YYVF), and 210–230 (VYML…GHFI). Positions 259–263 (HNEHH) match the Histidine box-3 motif. Ser-307 carries the phosphoserine modification.

Belongs to the fatty acid desaturase type 1 family. DEGS subfamily. Interacts with RLBP1; the interaction increases synthesis of chromophore-precursors by DEGS1. Post-translationally, myristoylation can target the enzyme to the mitochondria leading to an increase in ceramide levels.

It localises to the mitochondrion membrane. The protein resides in the endoplasmic reticulum membrane. The enzyme catalyses an N-acylsphinganine + 2 Fe(II)-[cytochrome b5] + O2 + 2 H(+) = an N-acylsphing-4-enine + 2 Fe(III)-[cytochrome b5] + 2 H2O. It carries out the reaction all-trans-retinol = 11-cis-retinol. It catalyses the reaction all-trans-retinol = 9-cis-retinol. The catalysed reaction is all-trans-retinol = 13-cis-retinol. The enzyme catalyses 11-cis-retinol = 13-cis-retinol. It carries out the reaction 11-cis-retinol = 9-cis-retinol. Has sphingolipid-delta-4-desaturase activity. Converts D-erythro-sphinganine to D-erythro-sphingosine (E-sphing-4-enine). Catalyzes the equilibrium isomerization of retinols. This is Sphingolipid delta(4)-desaturase DES1 from Rattus norvegicus (Rat).